The chain runs to 166 residues: Antibacterial peptide PMAP-36 (166 aa).

The N-terminal stretch at 1-29 (METQRASLCLGRWSLWLLLLGLVVPSASA) is a signal peptide. Positions 30 to 129 (QALSYREAVL…LDINCDEIQS (100 aa)) are excised as a propeptide. Cystine bridges form between Cys-85–Cys-96 and Cys-107–Cys-124.

It belongs to the cathelicidin family.

Its subcellular location is the secreted. In terms of biological role, exerts antimicrobial activity against both Gram-positive and negative bacteria. Its activity appears to be mediated by its ability to damage bacterial membranes. This chain is Antibacterial peptide PMAP-36 (PMAP36), found in Sus scrofa (Pig).